The primary structure comprises 188 residues: Elongation factor P (188 aa).

It belongs to the elongation factor P family.

Its subcellular location is the cytoplasm. It functions in the pathway protein biosynthesis; polypeptide chain elongation. Involved in peptide bond synthesis. Stimulates efficient translation and peptide-bond synthesis on native or reconstituted 70S ribosomes in vitro. Probably functions indirectly by altering the affinity of the ribosome for aminoacyl-tRNA, thus increasing their reactivity as acceptors for peptidyl transferase. In Rickettsia typhi (strain ATCC VR-144 / Wilmington), this protein is Elongation factor P.